A 95-amino-acid polypeptide reads, in one-letter code: uncharacterized protein (95 aa).

This is an uncharacterized protein from Haemophilus influenzae (strain ATCC 51907 / DSM 11121 / KW20 / Rd).